The primary structure comprises 1231 residues: Fanconi anemia group J protein homolog (1231 aa).

In terms of domain architecture, Helicase ATP-binding spans 11 to 448 (GGVKILFPCR…SDHEPLRAVC (438 aa)). ATP is bound at residue 46–53 (SPTGSGKS). Disordered regions lie at residues 104–126 (TFSSDRQMNSTDNAPSNISGASS) and 147–166 (QDDDFQTDRKRIRQSHDEQL). Positions 152–166 (QTDRKRIRQSHDEQL) are enriched in basic and acidic residues. Residues 155-173 (RKRIRQSHDEQLQARKRRC) carry the Nuclear localization signal motif. Residues cysteine 291, cysteine 304, cysteine 316, and cysteine 356 each contribute to the [4Fe-4S] cluster site. The DEAH box motif lies at 399 to 402 (DEAH). The segment covering 890 to 903 (SKNQQQRMQMSSTN) has biased composition (polar residues). Disordered stretches follow at residues 890–924 (SKNQQQRMQMSSTNCDDEPSQGTSSSSKNTSPTSS), 936–956 (VSEFTQPTSSTQSSVTSPPEI), and 1195–1231 (GNENAFNIGRNKGTEQKNRENRLSRSRNKGVSSFFLD). Low complexity-rich tracts occupy residues 909–924 (SQGTSSSSKNTSPTSS) and 940–954 (TQPTSSTQSSVTSPP). Residues 1206–1217 (KGTEQKNRENRL) are compositionally biased toward basic and acidic residues.

This sequence belongs to the DEAD box helicase family. DEAH subfamily. Requires [4Fe-4S] cluster as cofactor.

It is found in the nucleus. It carries out the reaction Couples ATP hydrolysis with the unwinding of duplex DNA at the replication fork by translocating in the 5'-3' direction. This creates two antiparallel DNA single strands (ssDNA). The leading ssDNA polymer is the template for DNA polymerase III holoenzyme which synthesizes a continuous strand.. The enzyme catalyses ATP + H2O = ADP + phosphate + H(+). Its function is as follows. DNA-dependent helicase and 5' to 3' DNA helicase required for the maintenance of chromosomal stability. Involved in the repair of DNA double-strand breaks by homologous recombination. Involved in the repair of abasic sites at replication forks by promoting the degradation of DNA-protein cross-links: acts by catalyzing unfolding of HMCES DNA-protein cross-link via its helicase activity, exposing the underlying DNA and enabling cleavage of the DNA-protein adduct by the SPRTN metalloprotease. This chain is Fanconi anemia group J protein homolog (brip1.L), found in Xenopus laevis (African clawed frog).